The sequence spans 331 residues: Aromatic 2-oxoacid reductase (331 aa).

Residues 154 to 155 (RI), D175, 205 to 206 (AP), N211, 232 to 234 (AAR), and D258 contribute to the NAD(+) site. Residue R234 is part of the active site. E263 is an active-site residue. The Proton donor role is filled by H295.

The protein belongs to the D-isomer specific 2-hydroxyacid dehydrogenase family.

The enzyme catalyses (R)-3-phenyllactate + NAD(+) = 3-phenylpyruvate + NADH + H(+). It catalyses the reaction (2R)-2-hydroxy-3-(4-hydroxyphenyl)propanoate + NAD(+) = 3-(4-hydroxyphenyl)pyruvate + NADH + H(+). It carries out the reaction 3-(indol-3-yl)lactate + NAD(+) = indole-3-pyruvate + NADH + H(+). It functions in the pathway amino-acid degradation. Its function is as follows. Essential for the reductive metabolism of L-phenylalanine, L-tyrosine and L-tryptophan. Catalyzes the conversion of phenylpyruvic acid to phenyllactic acid, 4-hydroxy-phenylpyruvic acid to 4-hydroxy-phenyllactic acid, and indolepyruvic acid to indolelactic acid. This is Aromatic 2-oxoacid reductase from Clostridium sporogenes (strain ATCC 7955 / DSM 767 / NBRC 16411 / NCIMB 8053 / NCTC 8594 / PA 3679).